The following is a 257-amino-acid chain: MWFLVLCLALSLGGTGRAPPIQSRIVGGWECSQPWQAALYHFSTFQCGGILVHPQWVLTAAHCISDNYQLWLGRHNLFDDEDTAQFVHVSESFPHPGFNMSLLKNHTRQADDYSHDLMLLRLTQPAEITDAVQVVELPTQEPEVGSTCLASGWGSIEPENFSFPDDLQCVDLEILPNDECAKAHTQKVTEFMLCAGHLEGGKDTCVGDSGGPLTCDGVLQGVTSWGYIPCGSPNKPAVFVKVLSYVKWIEDTIAENS.

Positions 1–18 are cleaved as a signal peptide; that stretch reads MWFLVLCLALSLGGTGRA. Residues 19–24 constitute a propeptide, activation peptide; sequence PPIQSR. Positions 25–254 constitute a Peptidase S1 domain; the sequence is IVGGWECSQP…YVKWIEDTIA (230 aa). Cystine bridges form between C31/C169, C47/C63, C148/C215, C180/C194, and C205/C230. H62 acts as the Charge relay system in catalysis. Residue S90 is glycosylated (O-linked (GalNAc...) serine). A glycan (N-linked (GlcNAc...) asparagine) is linked at N99. O-linked (GalNAc...) serine glycosylation occurs at S101. N105 carries an N-linked (GlcNAc...) asparagine glycan. D116 functions as the Charge relay system in the catalytic mechanism. N160 is a glycosylation site (N-linked (GlcNAc...) asparagine). The O-linked (GalNAc...) serine glycan is linked to S162. S209 serves as the catalytic Charge relay system.

This sequence belongs to the peptidase S1 family. Kallikrein subfamily.

It carries out the reaction Preferential cleavage of Arg-|-Xaa bonds in small molecule substrates. Highly selective action to release kallidin (lysyl-bradykinin) from kininogen involves hydrolysis of Met-|-Xaa or Leu-|-Xaa.. Glandular kallikreins cleave Met-Lys and Arg-Ser bonds in kininogen to release Lys-bradykinin. This is Kallikrein-1 (KLK1) from Macaca fascicularis (Crab-eating macaque).